The chain runs to 499 residues: UDP-N-acetylmuramoylalanine--D-glutamate ligase (499 aa).

120-126 is a binding site for ATP; it reads GTNGKTT.

It belongs to the MurCDEF family.

The protein localises to the cytoplasm. The enzyme catalyses UDP-N-acetyl-alpha-D-muramoyl-L-alanine + D-glutamate + ATP = UDP-N-acetyl-alpha-D-muramoyl-L-alanyl-D-glutamate + ADP + phosphate + H(+). The protein operates within cell wall biogenesis; peptidoglycan biosynthesis. Its function is as follows. Cell wall formation. Catalyzes the addition of glutamate to the nucleotide precursor UDP-N-acetylmuramoyl-L-alanine (UMA). The polypeptide is UDP-N-acetylmuramoylalanine--D-glutamate ligase (Nostoc punctiforme (strain ATCC 29133 / PCC 73102)).